Here is a 209-residue protein sequence, read N- to C-terminus: Small ribosomal subunit protein uS3 (209 aa).

In terms of domain architecture, KH type-2 spans 38-107 (IRKIIKNKYY…RVVINIEEIK (70 aa)).

This sequence belongs to the universal ribosomal protein uS3 family. In terms of assembly, part of the 30S ribosomal subunit. Forms a tight complex with proteins S10 and S14.

Functionally, binds the lower part of the 30S subunit head. Binds mRNA in the 70S ribosome, positioning it for translation. The chain is Small ribosomal subunit protein uS3 from Thermotoga maritima (strain ATCC 43589 / DSM 3109 / JCM 10099 / NBRC 100826 / MSB8).